The following is a 79-amino-acid chain: Acyl carrier protein (79 aa).

Residues 2 to 77 (SEIGERVKKI…DATKFLEKNA (76 aa)) form the Carrier domain. Ser-37 is modified (O-(pantetheine 4'-phosphoryl)serine).

It belongs to the acyl carrier protein (ACP) family. 4'-phosphopantetheine is transferred from CoA to a specific serine of apo-ACP by AcpS. This modification is essential for activity because fatty acids are bound in thioester linkage to the sulfhydryl of the prosthetic group.

Its subcellular location is the cytoplasm. It participates in lipid metabolism; fatty acid biosynthesis. In terms of biological role, carrier of the growing fatty acid chain in fatty acid biosynthesis. This Afipia carboxidovorans (strain ATCC 49405 / DSM 1227 / KCTC 32145 / OM5) (Oligotropha carboxidovorans) protein is Acyl carrier protein.